The sequence spans 212 residues: Pyridoxine/pyridoxamine 5'-phosphate oxidase (212 aa).

Substrate contacts are provided by residues 7–10 (RREY) and lysine 66. FMN is bound by residues 61–66 (RIVLLK), 76–77 (YT), lysine 83, and glutamine 105. Substrate-binding residues include tyrosine 123, arginine 127, and serine 131. FMN contacts are provided by residues 140-141 (QS) and tryptophan 185. 191 to 193 (RLH) contacts substrate. Arginine 195 contributes to the FMN binding site.

The protein belongs to the pyridoxamine 5'-phosphate oxidase family. Homodimer. It depends on FMN as a cofactor.

The catalysed reaction is pyridoxamine 5'-phosphate + O2 + H2O = pyridoxal 5'-phosphate + H2O2 + NH4(+). It catalyses the reaction pyridoxine 5'-phosphate + O2 = pyridoxal 5'-phosphate + H2O2. Its pathway is cofactor metabolism; pyridoxal 5'-phosphate salvage; pyridoxal 5'-phosphate from pyridoxamine 5'-phosphate: step 1/1. It participates in cofactor metabolism; pyridoxal 5'-phosphate salvage; pyridoxal 5'-phosphate from pyridoxine 5'-phosphate: step 1/1. In terms of biological role, catalyzes the oxidation of either pyridoxine 5'-phosphate (PNP) or pyridoxamine 5'-phosphate (PMP) into pyridoxal 5'-phosphate (PLP). The chain is Pyridoxine/pyridoxamine 5'-phosphate oxidase from Idiomarina loihiensis (strain ATCC BAA-735 / DSM 15497 / L2-TR).